Consider the following 531-residue polypeptide: MFSLQNLCRKTLPDCKLPEFFDEYILQLLGLYWENHGTIQRAGNNCVLVQQHTLIPVNEALRIAASEENYEIVSLLLAWEGNLYYAIIGALEGNRHDLIRKYDDQIKDHHEILPFIDNPVIFHKCHIMRRCFFDCILYQAVKYSKFRVLLYFKYRLENDLPLAHLLVEKACEDHNYEVIKWLYENLHIYNIMETFECAIAHKDLRLYRLGYTFIYNRIVPYKYHYLDVLILSGLHLLYKVAAKGYLDFILETLKYDHNNDNLDIILTQAVTYNHRKILTYYIPQLTYAQIEQCLFMAIKKKSSKKTLNLLLSHLKLSIKLIKKISQYVATYNSTNIIGILNMKRKKKIYLDIILTKFVKYAIFNKYVVRCMDTFSINPERIIKMAARINKMLLVKKISQHAWKNHAARLKHLKHAVYTMKHKDGKNRLMNLIYDHYYYHMQGEEIFSLARFYAIHHAPKLFDVFYDCCLLDTIRFKSLLLDCSHIIGKNAHDATNITIVNKYIGNLFAMGVLSKKEILQDYPSIYSKHYMP.

It belongs to the asfivirus MGF 505 family.

Functionally, plays a role in virus cell tropism, and may be required for efficient virus replication in macrophages. The sequence is that of Protein MGF 505-1R from Ornithodoros (relapsing fever ticks).